Consider the following 489-residue polypeptide: UDP-N-acetylmuramoyl-L-alanyl-D-glutamate--2,6-diaminopimelate ligase (489 aa).

S34 is a UDP-N-acetyl-alpha-D-muramoyl-L-alanyl-D-glutamate binding site. 110–116 provides a ligand contact to ATP; it reads GTAGKTS. UDP-N-acetyl-alpha-D-muramoyl-L-alanyl-D-glutamate-binding positions include 152 to 153, S179, Q185, and R187; that span reads TT. K219 bears the N6-carboxylysine mark. Residues R383, 407–410, G455, and E459 contribute to the meso-2,6-diaminopimelate site; that span reads DNPR. The Meso-diaminopimelate recognition motif motif lies at 407–410; it reads DNPR.

The protein belongs to the MurCDEF family. MurE subfamily. It depends on Mg(2+) as a cofactor. In terms of processing, carboxylation is probably crucial for Mg(2+) binding and, consequently, for the gamma-phosphate positioning of ATP.

It localises to the cytoplasm. It carries out the reaction UDP-N-acetyl-alpha-D-muramoyl-L-alanyl-D-glutamate + meso-2,6-diaminopimelate + ATP = UDP-N-acetyl-alpha-D-muramoyl-L-alanyl-gamma-D-glutamyl-meso-2,6-diaminopimelate + ADP + phosphate + H(+). It participates in cell wall biogenesis; peptidoglycan biosynthesis. Its function is as follows. Catalyzes the addition of meso-diaminopimelic acid to the nucleotide precursor UDP-N-acetylmuramoyl-L-alanyl-D-glutamate (UMAG) in the biosynthesis of bacterial cell-wall peptidoglycan. The protein is UDP-N-acetylmuramoyl-L-alanyl-D-glutamate--2,6-diaminopimelate ligase of Agrobacterium fabrum (strain C58 / ATCC 33970) (Agrobacterium tumefaciens (strain C58)).